The chain runs to 464 residues: ATP-dependent protease ATPase subunit HslU (464 aa).

Residues Ile22, 64 to 69 (GVGKTE), Asp275, Glu340, and Arg412 each bind ATP.

It belongs to the ClpX chaperone family. HslU subfamily. As to quaternary structure, a double ring-shaped homohexamer of HslV is capped on each side by a ring-shaped HslU homohexamer. The assembly of the HslU/HslV complex is dependent on binding of ATP.

The protein localises to the cytoplasm. Functionally, ATPase subunit of a proteasome-like degradation complex; this subunit has chaperone activity. The binding of ATP and its subsequent hydrolysis by HslU are essential for unfolding of protein substrates subsequently hydrolyzed by HslV. HslU recognizes the N-terminal part of its protein substrates and unfolds these before they are guided to HslV for hydrolysis. The chain is ATP-dependent protease ATPase subunit HslU from Cytophaga hutchinsonii (strain ATCC 33406 / DSM 1761 / CIP 103989 / NBRC 15051 / NCIMB 9469 / D465).